A 255-amino-acid chain; its full sequence is Na(+)-translocating NADH-quinone reductase subunit C (255 aa).

Residues 12 to 32 form a helical membrane-spanning segment; it reads LFVVIALSLVCSIIVSTAAVG. Thr-223 bears the FMN phosphoryl threonine mark.

It belongs to the NqrC family. Composed of six subunits; NqrA, NqrB, NqrC, NqrD, NqrE and NqrF. FMN serves as cofactor.

The protein localises to the cell inner membrane. It catalyses the reaction a ubiquinone + n Na(+)(in) + NADH + H(+) = a ubiquinol + n Na(+)(out) + NAD(+). NQR complex catalyzes the reduction of ubiquinone-1 to ubiquinol by two successive reactions, coupled with the transport of Na(+) ions from the cytoplasm to the periplasm. NqrA to NqrE are probably involved in the second step, the conversion of ubisemiquinone to ubiquinol. The chain is Na(+)-translocating NADH-quinone reductase subunit C from Vibrio anguillarum (Listonella anguillarum).